Reading from the N-terminus, the 71-residue chain is Large ribosomal subunit protein uL29 (71 aa).

This sequence belongs to the universal ribosomal protein uL29 family.

The protein is Large ribosomal subunit protein uL29 of Rickettsia massiliae (strain Mtu5).